The chain runs to 626 residues: Two-component response regulator ORR24 (626 aa).

The tract at residues 1 to 22 (MTVEERQGRVGGHGVSGGGGGR) is disordered. Gly residues predominate over residues 9–22 (RVGGHGVSGGGGGR). Residues 30–145 (RVLAVDDDPT…QLRTIWQHVI (116 aa)) enclose the Response regulatory domain. A 4-aspartylphosphate modification is found at D81. The segment covering 151–162 (DAKNRGNDDDAG) has biased composition (basic and acidic residues). Disordered stretches follow at residues 151-215 (DAKN…KKPR) and 402-440 (PLES…RTTN). The span at 191 to 202 (NGDDGDDSDENS) shows a compositional bias: acidic residues. A DNA-binding region (myb-like GARP) is located at residues 210 to 269 (TQKKPRVVWSVELHRKFVAAVNQLGIEKAVPKKILDLMNVENITRENVASHLQKYRLYLK). Residues 402-421 (PLESSNQQHLSRVHSSSADP) show a composition bias toward polar residues.

The protein belongs to the ARR family. Type-B subfamily. In terms of processing, two-component system major event consists of a His-to-Asp phosphorelay between a sensor histidine kinase (HK) and a response regulator (RR). In plants, the His-to-Asp phosphorelay involves an additional intermediate named Histidine-containing phosphotransfer protein (HPt). This multistep phosphorelay consists of a His-Asp-His-Asp sequential transfer of a phosphate group between first a His and an Asp of the HK protein, followed by the transfer to a conserved His of the HPt protein and finally the transfer to an Asp in the receiver domain of the RR protein.

The protein resides in the nucleus. Functionally, transcriptional activator that binds specific DNA sequence. Functions as a response regulator involved in His-to-Asp phosphorelay signal transduction system. Phosphorylation of the Asp residue in the receiver domain activates the ability of the protein to promote the transcription of target genes. May directly activate some type-A response regulators in response to cytokinins. This chain is Two-component response regulator ORR24, found in Oryza sativa subsp. japonica (Rice).